Here is a 406-residue protein sequence, read N- to C-terminus: Cysteine desulfurase (406 aa).

Lys-226 carries the post-translational modification N6-(pyridoxal phosphate)lysine. The active-site Cysteine persulfide intermediate is the Cys-364.

This sequence belongs to the class-V pyridoxal-phosphate-dependent aminotransferase family. Csd subfamily. Homodimer. Interacts with SufE and the SufBCD complex composed of SufB, SufC and SufD. The interaction with SufE is required to mediate the direct transfer of the sulfur atom from the S-sulfanylcysteine. The cofactor is pyridoxal 5'-phosphate.

The protein localises to the cytoplasm. The catalysed reaction is (sulfur carrier)-H + L-cysteine = (sulfur carrier)-SH + L-alanine. The enzyme catalyses L-selenocysteine + AH2 = hydrogenselenide + L-alanine + A + H(+). It participates in cofactor biosynthesis; iron-sulfur cluster biosynthesis. Its function is as follows. Cysteine desulfurases mobilize the sulfur from L-cysteine to yield L-alanine, an essential step in sulfur metabolism for biosynthesis of a variety of sulfur-containing biomolecules. Component of the suf operon, which is activated and required under specific conditions such as oxidative stress and iron limitation. Acts as a potent selenocysteine lyase in vitro, that mobilizes selenium from L-selenocysteine. Selenocysteine lyase activity is however unsure in vivo. This chain is Cysteine desulfurase, found in Yersinia pestis bv. Antiqua (strain Antiqua).